Reading from the N-terminus, the 68-residue chain is Protein transport protein Sec61 subunit gamma (68 aa).

The Cytoplasmic portion of the chain corresponds to 1–32 (MDQVMQFVEPSRQFVKDSIRLVKRCTKPDRKE). A helical membrane pass occupies residues 33–61 (FQKVAMATAIGFAIMGFIGFFVKLIHIPI). Residues 62–68 (NNIIVGG) are Extracellular-facing.

It belongs to the SecE/SEC61-gamma family. As to quaternary structure, the SEC61 channel-forming translocon complex consists of channel-forming core components SEC61A1, SEC61B and SEC61G and different auxiliary components such as SEC62 and SEC63. The SEC61 channel associates with the multi-pass translocon (MPT) complex.

It is found in the endoplasmic reticulum membrane. Functionally, component of SEC61 channel-forming translocon complex that mediates transport of signal peptide-containing precursor polypeptides across the endoplasmic reticulum (ER). Forms a ribosome receptor and a gated pore in the ER membrane, both functions required for cotranslational translocation of nascent polypeptides. The SEC61 channel is also involved in ER membrane insertion of transmembrane proteins: it mediates membrane insertion of the first few transmembrane segments of proteins, while insertion of subsequent transmembrane regions of multi-pass membrane proteins is mediated by the multi-pass translocon (MPT) complex. The sequence is that of Protein transport protein Sec61 subunit gamma (sec61g) from Harpagifer antarcticus (Antarctic spiny plunderfish).